The primary structure comprises 174 residues: Nicotinamide-nucleotide adenylyltransferase (174 aa).

The protein belongs to the archaeal NMN adenylyltransferase family.

Its subcellular location is the cytoplasm. The enzyme catalyses beta-nicotinamide D-ribonucleotide + ATP + H(+) = diphosphate + NAD(+). It functions in the pathway cofactor biosynthesis; NAD(+) biosynthesis; NAD(+) from nicotinamide D-ribonucleotide: step 1/1. The chain is Nicotinamide-nucleotide adenylyltransferase from Methanospirillum hungatei JF-1 (strain ATCC 27890 / DSM 864 / NBRC 100397 / JF-1).